The sequence spans 453 residues: Na(+)/H(+) antiporter NhaA (453 aa).

The next 11 helical transmembrane spans lie at 22–42 (ASLLLFAATIVAMVLANSPWA), 72–92 (MLAFVNDALMAVFFFVIGLEI), 108–128 (LLPIIAACGGMIVPVLFYMLV), 137–157 (GAAIPMATDIAFALAVLGLLG), 166–186 (IFLTALAVVDDIGGIIIIALF), 189–209 (GHIAFEPLLISLIVLALLYVG), 218–238 (LFFYIGGFIVWLLFLESGIHP), 316–336 (PLVNYVILPLFAFVNAGVTFG), 343–363 (LVNVPLAVFVGLFVGKTLGIF), 386–406 (LFGVSMLGGIGFTVALFIANL), and 424–444 (LGVFTGSFISGLCGYLVLKWV).

The protein belongs to the NhaA Na(+)/H(+) (TC 2.A.33) antiporter family.

It is found in the cell inner membrane. It catalyses the reaction Na(+)(in) + 2 H(+)(out) = Na(+)(out) + 2 H(+)(in). Its function is as follows. Na(+)/H(+) antiporter that extrudes sodium in exchange for external protons. In Parabacteroides distasonis (strain ATCC 8503 / DSM 20701 / CIP 104284 / JCM 5825 / NCTC 11152), this protein is Na(+)/H(+) antiporter NhaA.